The sequence spans 214 residues: Adenylate kinase (214 aa).

10–15 (GAGKGT) serves as a coordination point for ATP. The segment at 30–59 (STGDMLRAAIKAGTELGNAAKRVMDEGKLV) is NMP. AMP contacts are provided by residues Thr31, Arg36, 57 to 59 (KLV), 85 to 88 (GFPR), and Gln92. An LID region spans residues 122–159 (GRRVHPASGRVYHLQYNPPQNDGKDDETGEDLVIRADD). ATP-binding positions include Arg123 and 132 to 133 (VY). Residues Arg156 and Arg167 each coordinate AMP. Lys200 contacts ATP.

The protein belongs to the adenylate kinase family. Monomer.

Its subcellular location is the cytoplasm. It catalyses the reaction AMP + ATP = 2 ADP. Its pathway is purine metabolism; AMP biosynthesis via salvage pathway; AMP from ADP: step 1/1. Catalyzes the reversible transfer of the terminal phosphate group between ATP and AMP. Plays an important role in cellular energy homeostasis and in adenine nucleotide metabolism. This Pseudoalteromonas atlantica (strain T6c / ATCC BAA-1087) protein is Adenylate kinase.